The primary structure comprises 137 residues: Fluoride-specific ion channel FluC 4 (137 aa).

4 helical membrane passes run 20–40, 43–63, 83–103, and 110–130; these read AAIG…ILGA, LWGT…FATL, GLCG…LLVL, and ALAY…LGLI. Na(+) is bound by residues Gly-86 and Thr-89.

Belongs to the fluoride channel Fluc/FEX (TC 1.A.43) family.

The protein resides in the cell inner membrane. The catalysed reaction is fluoride(in) = fluoride(out). With respect to regulation, na(+) is not transported, but it plays an essential structural role and its presence is essential for fluoride channel function. In terms of biological role, fluoride-specific ion channel. Important for reducing fluoride concentration in the cell, thus reducing its toxicity. The protein is Fluoride-specific ion channel FluC 4 of Brucella suis biovar 1 (strain 1330).